A 385-amino-acid chain; its full sequence is MNIHEYQAKEILRKYGVPTSTGVVVTKTESINAAIDKLNTKVYVVKAQIHAGGRGKAGGVKVVKSKEEAKKVAHDMFGINLVTHQTGPQGQKVNRLYIESGCDILKEYYFSVVFDRSASCITFIASTEGGVDIEEVAEKTPEKIIKFSVDPATGLQNFHAQGIAYELGFKDHQVKQMKEIVKATYKAFIETDAAQIEINPLIVNKEGNLLALDAKFTFDDNGLFKHPEIMALRDQDEEDPLETRAADAGLSYVKMDGSIGCMVNGAGLAMATMDIIKLYGATPANFLDVGGGADRERVKEALKIILSDKEVKGILVNIFGGIMRCDIIAEGIIAAAKDIGIKVPLVVRLAGTNVEKGKEILSNSGLEIIPAHDLADAASKIVEAI.

An ATP-grasp domain is found at 9–244 (KEILRKYGVP…QDEEDPLETR (236 aa)). Residues Lys-46, 53–55 (GRG), Glu-99, Cys-102, and Glu-107 contribute to the ATP site. Mg(2+)-binding residues include Asn-199 and Asp-213. Substrate contacts are provided by residues Asn-264 and 321 to 323 (GIM).

It belongs to the succinate/malate CoA ligase beta subunit family. In terms of assembly, heterotetramer of two alpha and two beta subunits. The cofactor is Mg(2+).

It catalyses the reaction succinate + ATP + CoA = succinyl-CoA + ADP + phosphate. The enzyme catalyses GTP + succinate + CoA = succinyl-CoA + GDP + phosphate. It functions in the pathway carbohydrate metabolism; tricarboxylic acid cycle; succinate from succinyl-CoA (ligase route): step 1/1. Its function is as follows. Succinyl-CoA synthetase functions in the citric acid cycle (TCA), coupling the hydrolysis of succinyl-CoA to the synthesis of either ATP or GTP and thus represents the only step of substrate-level phosphorylation in the TCA. The beta subunit provides nucleotide specificity of the enzyme and binds the substrate succinate, while the binding sites for coenzyme A and phosphate are found in the alpha subunit. The polypeptide is Succinate--CoA ligase [ADP-forming] subunit beta (Rickettsia bellii (strain OSU 85-389)).